The following is a 315-amino-acid chain: BTB/POZ domain-containing adapter for CUL3-mediated RhoA degradation protein 3 (315 aa).

An N-acetylmethionine modification is found at Met1. Ser23 carries the post-translational modification Phosphoserine. A BTB domain is found at 32–100; sequence KYVKLNVGGA…LRDGGVPLPE (69 aa). The PCNA-binding signature appears at 239-245; the sequence is QTKVEFP. The segment at 269–294 is disordered; it reads NALLEATGGAAGRSHHLDEDEERERE.

The protein belongs to the BACURD family. As to quaternary structure, homotetramer; forms a two-fold symmetric tetramer in solution. Interacts with CUL3; interaction is direct and forms a 5:5 heterodecamer. Component of the BCR(BACURD3) E3 ubiquitin ligase complex, at least composed of CUL3, KCTD10/BACURD3 and RBX1. Interacts with DNA polymerase delta subunit 2/POLD2. Interacts with PCNA. Associated with the tectonic-like complex (also named B9 complex); however as Kctd10 has not been identified in all tectonic-like complexes purifications it is unclear whether it is really part of the complex.

It is found in the nucleus. Its pathway is protein modification; protein ubiquitination. Substrate-specific adapter of a BCR (BTB-CUL3-RBX1) E3 ubiquitin-protein ligase complex. The BCR(BACURD3) E3 ubiquitin ligase complex mediates the ubiquitination of target proteins, leading to their degradation by the proteasome. In Mus musculus (Mouse), this protein is BTB/POZ domain-containing adapter for CUL3-mediated RhoA degradation protein 3 (Kctd10).